We begin with the raw amino-acid sequence, 225 residues long: Late embryogenesis abundant protein 29 (225 aa).

2 disordered regions span residues 1 to 167 and 193 to 225; these read MASN…GGFL and TEEE…YQRK. Composition is skewed to basic and acidic residues over residues 28 to 39, 49 to 61, 71 to 83, and 93 to 119; these read MRDKAEEGRDKT, KAHE…KDKT, KAHE…KEKT, and KAHE…KDKA. LEA 11-mer repeat repeat units follow at residues 53-63, 75-85, and 97-107; these read TAQSAKDKTSQ, TAQSAKEKTSQ, and TTQAAKEKTSQ. A compositionally biased stretch (polar residues) spans 141–153; the sequence is TKETAQGAAQYTK. The span at 154–163 shows a compositional bias: basic and acidic residues; that stretch reads ETAEAGRDKT. Residues 205-225 show a composition bias toward low complexity; the sequence is TTTTTATTRTTDPTHQTYQRK.

Belongs to the LEA type 4 family.

It localises to the cytoplasm. The protein resides in the cytosol. Functionally, involved dehydration tolerance. This is Late embryogenesis abundant protein 29 from Arabidopsis thaliana (Mouse-ear cress).